A 1299-amino-acid chain; its full sequence is MVAHKKSKKKSKKQHGSAGEKELHESKIHAEIIDDEAEYPTSRVIKRAPNGDVIVESLPEEESLDRSELNQDHRSGSSSSSTNSGGVTNTADCNADADNEEVEDTKWPIKLDTHWESLSLEERRNILRISKDELFDMIKSYKNMHNCDCSMCGRHNNLNIEQEIEQIYCELYDSAREEDSDTDFVQFHLKLIKEYQNGSNNTHHHMRHHGDKQDSNICHENFAHNDNDDNNDSTNKNAFLSSILPKEKNASTSENECTNDFLDSLSEDSAIKYCLSEGAIGLDKSYQVDFLGKEEVDSNMDTIPNSDNKTQTALDWKHEIEQFKSSKQKQVSESTTGKEALPPINDIDNTNEVIPEHDEFDSKLLHFAKTVVSSHPHIAEEFINRAMMYPHIKAITEDMMNNEGEGLKRAMESLVLQQELQDWRENMAVSIEKKIYEMDPTEPVIDVSESDSHENERVNGPANALEENNKKDVIESDSLDRPSLVDNNKVDSLIDSIPFKFVKDPKAVASLKNAFYDIFTNKTRRSEIDQDDKEYKEELERLRNEISADEDQASYEWSNDEYEESNDHDEDAEGYVDDECIDDHHLDSGYDDENEDEDIIYDDLHENVKLNEDPSAVPNGHTQLIHHDNSVTSNVSEDGIDDNYDSELDHAERLEEGRRLIQIAITKLLQKKLIASYQEKEAEKNRERLLMELEAEENQKKEKEKKKLKKKEKEKEKKRQQQLAKEEEKKRQEEEEIRLKKEAEEKEIARREAQRKKVEEAKRKNDEKRKKKLAEQRRREEEQERIRKEKEEQKRQREEEQKQKKMEKERKQREFEEQRLLKKKEAEQLQKLKENQKLNEKSMQKNQDTTTEGVPYGSVSTNPLQNNSTLNDDIFNMINEVSKSLSSSPSRNQNDLLGSSVLSNVDHQGGLNAGNVFIPPSLSMSEMSPHAQAGFNTLGSSLQPNLLNGWDQQSSTQAYYHANQPSSSEAPGLLPLSHGGSSSKFSSFADTTVDVTDDVNNLTSFLKDTTINDISLGSTSSIPAQNLDPVNMAPRPQSAVYNQPNLWNNDPNQRLSNFGQQHVQQNPISSSHSQPRRSIWDTGAENTFGVASANNFASNIWDTPTSTPALPNTLLSSQVAATSVDSYEEVLAKTYKMLSPDNSFVPLDKLYQTSLTQINAKSVLSYPQFISTLVSMKNSYNTELLNDNTGLLAYCRMGSVPVPSGLPSYNRQNTFPHATTQVQSDSQQINSVSTPISNPLPQPSSVFNDVHYNQTATTSPANHGNPIPGPTSTIASDPSNFVNFGQSYPNSYQTGNIWS.

Residues 1-15 (MVAHKKSKKKSKKQH) show a composition bias toward basic residues. Disordered stretches follow at residues 1–104 (MVAH…EVED), 200–237 (NNTH…TNKN), 324–347 (KSSK…INDI), 446–486 (DVSE…SLVD), 543–573 (RNEI…EDAE), 694–816 (EAEE…REFE), 834–868 (ENQK…QNNS), and 960–981 (YHAN…HGGS). Basic and acidic residues-rich tracts occupy residues 18-32 (AGEK…HAEI) and 64-75 (LDRSELNQDHRS). The span at 76 to 90 (GSSSSSTNSGGVTNT) shows a compositional bias: low complexity. Polar residues predominate over residues 325-337 (SSKQKQVSESTTG). The segment covering 467–480 (ENNKKDVIESDSLD) has biased composition (basic and acidic residues). Over residues 547 to 573 (SADEDQASYEWSNDEYEESNDHDEDAE) the composition is skewed to acidic residues. Residues 675–847 (ASYQEKEAEK…LNEKSMQKNQ (173 aa)) are a coiled coil. Composition is skewed to basic and acidic residues over residues 711–816 (KEKE…REFE) and 834–843 (ENQKLNEKSM). Composition is skewed to polar residues over residues 844 to 868 (QKNQ…QNNS) and 960 to 969 (YHANQPSSSE). Positions 971–981 (PGLLPLSHGGS) are enriched in low complexity.

Belongs to the NST1 family.

It is found in the cytoplasm. Functionally, may act as a negative regulator of salt tolerance. The protein is Stress response protein NST1 (NST1) of Kluyveromyces lactis (strain ATCC 8585 / CBS 2359 / DSM 70799 / NBRC 1267 / NRRL Y-1140 / WM37) (Yeast).